Here is a 468-residue protein sequence, read N- to C-terminus: ATP synthase subunit beta (468 aa).

ATP is bound at residue glycine 155–threonine 162.

This sequence belongs to the ATPase alpha/beta chains family. As to quaternary structure, F-type ATPases have 2 components, CF(1) - the catalytic core - and CF(0) - the membrane proton channel. CF(1) has five subunits: alpha(3), beta(3), gamma(1), delta(1), epsilon(1). CF(0) has three main subunits: a(1), b(2) and c(9-12). The alpha and beta chains form an alternating ring which encloses part of the gamma chain. CF(1) is attached to CF(0) by a central stalk formed by the gamma and epsilon chains, while a peripheral stalk is formed by the delta and b chains.

Its subcellular location is the cell membrane. It catalyses the reaction ATP + H2O + 4 H(+)(in) = ADP + phosphate + 5 H(+)(out). Produces ATP from ADP in the presence of a proton gradient across the membrane. The catalytic sites are hosted primarily by the beta subunits. In Streptococcus pyogenes serotype M1, this protein is ATP synthase subunit beta.